Reading from the N-terminus, the 135-residue chain is MELPPKNFETIKINNRTYIKLTGDKPLSEKLWPERKNETLYRMEFRVEFPKMSIENLSEYKIDDESVRVLLNYTNASYVRLYISLYYLEFDYVDILGKRFYTNFGHYDSLRCWSVVNVTEVERNKWISAPVSCES.

This is an uncharacterized protein from Archaeoglobus fulgidus (strain ATCC 49558 / DSM 4304 / JCM 9628 / NBRC 100126 / VC-16).